The sequence spans 553 residues: 5'-nucleotidase (553 aa).

The N-terminal stretch at 1-21 is a signal peptide; sequence MKQGLILKSVLSAAIIASLAG. A lipid anchor (N-palmitoyl cysteine) is attached at cysteine 22. The S-diacylglycerol cysteine moiety is linked to residue cysteine 22. Positions 45, 47, 88, 120, 221, 256, and 258 each coordinate a divalent metal cation. Residues phenylalanine 432 and 501–507 each bind substrate; that span reads FNAAGGD.

The protein belongs to the 5'-nucleotidase family. Requires chloride as cofactor. The cofactor is Mg(2+).

It is found in the cell outer membrane. The enzyme catalyses a ribonucleoside 5'-phosphate + H2O = a ribonucleoside + phosphate. Its function is as follows. Degradation of extracellular 5'-nucleotides for nutritional needs. In Vibrio cholerae serotype O1 (strain ATCC 39315 / El Tor Inaba N16961), this protein is 5'-nucleotidase (nutA).